Consider the following 299-residue polypeptide: Acetylglutamate kinase (299 aa).

Residues 70–71 (GG), Arg-92, and Asn-186 contribute to the substrate site.

This sequence belongs to the acetylglutamate kinase family. ArgB subfamily.

Its subcellular location is the cytoplasm. It catalyses the reaction N-acetyl-L-glutamate + ATP = N-acetyl-L-glutamyl 5-phosphate + ADP. It functions in the pathway amino-acid biosynthesis; L-arginine biosynthesis; N(2)-acetyl-L-ornithine from L-glutamate: step 2/4. Functionally, catalyzes the ATP-dependent phosphorylation of N-acetyl-L-glutamate. The protein is Acetylglutamate kinase of Caldanaerobacter subterraneus subsp. tengcongensis (strain DSM 15242 / JCM 11007 / NBRC 100824 / MB4) (Thermoanaerobacter tengcongensis).